Here is a 415-residue protein sequence, read N- to C-terminus: MELRVGNRYRLGRKIGSGSFGDIYLGTDIAAGEEVAIKLECVKTKHPQLHIESKIYKMMQGGVGIPTIRWCGAEGDYNVMVMELLGPSLEDLFNFCSRKFSLKTVLLLADQMISRIEYIHSKNFIHRDVKPDNFLMGLGKKGNLVYIIDFGLAKKYRDARTHQHIPYRENKNLTGTARYASINTHLGIEQSRRDDLESLGYVLMYFNLGSLPWQGLKAATKRQKYERISEKKMSTPIEVLCKGYPSEFATYLNFCRSLRFDDKPDYSYLRQLFRNLFHRQGFSYDYVFDWNMLKFGASRAADDAERERRDREERLRHSRNPATRGLPSTASGRLRGTQEVAPPTPLTPTSHTANTSPRPVSGMERERKVSMRLHRGAPVNISSSDLTGRQDTSRMSTSQIPGRVASSGLQSVVHR.

A Protein kinase domain is found at 9 to 277 (YRLGRKIGSG…YLRQLFRNLF (269 aa)). Residues 15 to 23 (IGSGSFGDI) and Lys38 each bind ATP. Asp128 (proton acceptor) is an active-site residue. Positions 278–364 (HRQGFSYDYV…TSPRPVSGME (87 aa)) are centrosomal localization signal (CLS). Positions 301-315 (ADDAERERRDREERL) are enriched in basic and acidic residues. Residues 301-415 (ADDAERERRD…SSGLQSVVHR (115 aa)) are disordered. The interval 317–342 (HSRNPATRGLPSTASGRLRGTQEVAP) is autoinhibitory. 2 positions are modified to phosphoserine: Ser328 and Ser331. A compositionally biased stretch (polar residues) spans 347–358 (TPTSHTANTSPR). A Phosphoserine modification is found at Ser370. Omega-N-methylarginine is present on Arg375. Residues 380-400 (NISSSDLTGRQDTSRMSTSQI) show a composition bias toward polar residues. Phosphoserine is present on residues Ser382, Ser383, Ser384, Ser407, and Ser411.

Belongs to the protein kinase superfamily. CK1 Ser/Thr protein kinase family. Casein kinase I subfamily. In terms of assembly, monomer. Component of the circadian core oscillator, which includes the CRY proteins, CLOCK, or NPAS2, ARTNL/BMAL1 or ARTNL2/BMAL2, CSNK1D and/or CSNK1E, TIMELESS and the PER proteins. Interacts with DNMT1 and MAP1A. Interacts directly with PER1 and PER2 which may lead to their degradation. Interacts with MAPT/TAU, SNAPIN, DBNDD2, AIB1/NCOA3 and ESR1. Interacts with AKAP9/AKAP450; this interaction promotes centrosomal subcellular location. Binds to tubulins in mitotic cells upon DNA damage. Interacts with GJA1. Interacts with DDX3X; this interaction enhances CSNK1D kinase activity in vitro, but it is unclear whether this interaction is physiologically relevant. Interacts with FAM83A, FAM83B, FAM83E and FAM83H (via DUF1669). In terms of processing, autophosphorylated on serine and threonine residues; this autophosphorylation represses activity. Reactivated by phosphatase-mediated dephosphorylation. May be dephosphorylated by PP1.

It is found in the cytoplasm. The protein resides in the nucleus. Its subcellular location is the cytoskeleton. It localises to the microtubule organizing center. The protein localises to the centrosome. It is found in the perinuclear region. The protein resides in the cell membrane. Its subcellular location is the spindle. It localises to the golgi apparatus. The enzyme catalyses L-seryl-[protein] + ATP = O-phospho-L-seryl-[protein] + ADP + H(+). It carries out the reaction L-threonyl-[protein] + ATP = O-phospho-L-threonyl-[protein] + ADP + H(+). The catalysed reaction is L-seryl-[tau protein] + ATP = O-phospho-L-seryl-[tau protein] + ADP + H(+). It catalyses the reaction L-threonyl-[tau protein] + ATP = O-phospho-L-threonyl-[tau protein] + ADP + H(+). Its activity is regulated as follows. Drug-mediated inhibition leads to a delay of the oscillations with the magnitude of this effect dependent upon the timing of drug administration. Inhibited by phosphorylation. Exhibits substrate-dependent heparin activation. Functionally, essential serine/threonine-protein kinase that regulates diverse cellular growth and survival processes including Wnt signaling, DNA repair and circadian rhythms. It can phosphorylate a large number of proteins. Casein kinases are operationally defined by their preferential utilization of acidic proteins such as caseins as substrates. Phosphorylates connexin-43/GJA1, MAP1A, SNAPIN, MAPT/TAU, TOP2A, DCK, HIF1A, EIF6, p53/TP53, DVL2, DVL3, ESR1, AIB1/NCOA3, DNMT1, PKD2, YAP1, PER1 and PER2. Central component of the circadian clock. In balance with PP1, determines the circadian period length through the regulation of the speed and rhythmicity of PER1 and PER2 phosphorylation. Controls PER1 and PER2 nuclear transport and degradation. YAP1 phosphorylation promotes its SCF(beta-TRCP) E3 ubiquitin ligase-mediated ubiquitination and subsequent degradation. DNMT1 phosphorylation reduces its DNA-binding activity. Phosphorylation of ESR1 and AIB1/NCOA3 stimulates their activity and coactivation. Phosphorylation of DVL2 and DVL3 regulates WNT3A signaling pathway that controls neurite outgrowth. Phosphorylates NEDD9/HEF1. EIF6 phosphorylation promotes its nuclear export. Triggers down-regulation of dopamine receptors in the forebrain. Activates DCK in vitro by phosphorylation. TOP2A phosphorylation favors DNA cleavable complex formation. May regulate the formation of the mitotic spindle apparatus in extravillous trophoblast. Modulates connexin-43/GJA1 gap junction assembly by phosphorylation. Probably involved in lymphocyte physiology. Regulates fast synaptic transmission mediated by glutamate. The sequence is that of Casein kinase I isoform delta (CSNK1D) from Bos taurus (Bovine).